Here is a 155-residue protein sequence, read N- to C-terminus: Large ribosomal subunit protein uL15 (155 aa).

Over residues 1 to 16 the composition is skewed to basic residues; the sequence is MVRRFKRAVKYRRGSR. The segment at 1–35 is disordered; that stretch reads MVRRFKRAVKYRRGSRTHGWGRVGQHRKSGGSGGK.

The protein belongs to the universal ribosomal protein uL15 family. As to quaternary structure, part of the 50S ribosomal subunit.

In terms of biological role, binds to the 23S rRNA. The polypeptide is Large ribosomal subunit protein uL15 (Pyrobaculum arsenaticum (strain DSM 13514 / JCM 11321 / PZ6)).